Reading from the N-terminus, the 255-residue chain is MSDYIVVKCGGSMLNQLNAVFFDCIKKLQQKYKVVIIHGGGPEIDAKLKDCNINVEKRDGLRVTPKEVMDVVQMVLCGSTNKKLVMNLQKHNLLAVGCSGCDGNLLQVQPVSEEIGYVGEVSYVETALLKGLINMGYIPVIAPIGVNGNEIYNINADNAAAGIAAALGAKELIFITDVDGILHEGNLVKETDESEIATFIETGVITGGMIPKVQAALASLKMGVQKISIVNGTKDFTEVTGECIGTTVTKGVSIA.

Substrate is bound by residues 40 to 41 (GG), Arg-62, and Asn-153.

Belongs to the acetylglutamate kinase family. ArgB subfamily.

It is found in the cytoplasm. It catalyses the reaction N-acetyl-L-glutamate + ATP = N-acetyl-L-glutamyl 5-phosphate + ADP. It functions in the pathway amino-acid biosynthesis; L-arginine biosynthesis; N(2)-acetyl-L-ornithine from L-glutamate: step 2/4. Functionally, catalyzes the ATP-dependent phosphorylation of N-acetyl-L-glutamate. This is Acetylglutamate kinase from Bacillus cereus (strain G9842).